The chain runs to 338 residues: Phosphoribosylformylglycinamidine cyclo-ligase (338 aa).

The protein belongs to the AIR synthase family.

It localises to the cytoplasm. The catalysed reaction is 2-formamido-N(1)-(5-O-phospho-beta-D-ribosyl)acetamidine + ATP = 5-amino-1-(5-phospho-beta-D-ribosyl)imidazole + ADP + phosphate + H(+). It participates in purine metabolism; IMP biosynthesis via de novo pathway; 5-amino-1-(5-phospho-D-ribosyl)imidazole from N(2)-formyl-N(1)-(5-phospho-D-ribosyl)glycinamide: step 2/2. The protein is Phosphoribosylformylglycinamidine cyclo-ligase of Thermoplasma acidophilum (strain ATCC 25905 / DSM 1728 / JCM 9062 / NBRC 15155 / AMRC-C165).